Consider the following 248-residue polypeptide: MALLEICCYSMECALTAQRNGADRIELCAAPKEGGLTPSFGVLRSVREHITIPIHPIIRPRGGDFYYTDGEFAAMLEDIRLVRELGFPGLVTGVLTVDGDVDMSRMEKIMAAAGPLAVTFHRAFDMCANPFNALKNLADAGVARVLTSGQKADAAQGLSIIMELIAQGDAPIIMAGAGVRANNLQNFLDAGVREVHSSAGVLLPSPMRYRNQGLSMSADIQADEYSRYRVEGAAVAEMKGIIVRHQAK.

It belongs to the CutC family. Homodimer.

The protein localises to the cytoplasm. The chain is PF03932 family protein CutC from Salmonella newport (strain SL254).